The following is a 67-amino-acid chain: Large ribosomal subunit protein bL35 (67 aa).

Positions 1–41 (MPKMKTHRGAAKRFKKTGTGKLKRSHAYTSHMFRHKSQKQK) are disordered.

It belongs to the bacterial ribosomal protein bL35 family.

The chain is Large ribosomal subunit protein bL35 from Shouchella clausii (strain KSM-K16) (Alkalihalobacillus clausii).